The chain runs to 189 residues: MKTGKELKPGTVIRLENDPWLVQKAEFTKSGRNSAIMKTKLKNLLTGYKTEIVYSADDKLDDVILDRKEATLSFISGDTYTFMDTSDYTMYELNAEDIESVLPFVEEGMTDVCEAVFFEDRLVSVELPTTIVRQVDYTEGSARGDTSGKVMKPAKLKNGTELSVADFIEIGDMIEIDTREGGSYKGRAK.

Belongs to the elongation factor P family.

It localises to the cytoplasm. Its pathway is protein biosynthesis; polypeptide chain elongation. Its function is as follows. Involved in peptide bond synthesis. Stimulates efficient translation and peptide-bond synthesis on native or reconstituted 70S ribosomes in vitro. Probably functions indirectly by altering the affinity of the ribosome for aminoacyl-tRNA, thus increasing their reactivity as acceptors for peptidyl transferase. This Pseudomonas syringae pv. syringae (strain B728a) protein is Elongation factor P.